The sequence spans 394 residues: Elongation factor Tu 2 (394 aa).

Positions 9–204 (KPHCNIGTIG…SIDDYIPQPT (196 aa)) constitute a tr-type G domain. The G1 stretch occupies residues 18 to 25 (GHVDHGKT). 18–25 (GHVDHGKT) lines the GTP pocket. Thr25 is a Mg(2+) binding site. Residues 61–65 (GITIQ) are G2. Residues 82-85 (DCPG) are G3. Residues 82-86 (DCPGH) and 137-140 (NKID) each bind GTP. The segment at 137-140 (NKID) is G4. Residues 174-176 (SAL) form a G5 region.

It belongs to the TRAFAC class translation factor GTPase superfamily. Classic translation factor GTPase family. EF-Tu/EF-1A subfamily. Monomer.

It localises to the cytoplasm. The enzyme catalyses GTP + H2O = GDP + phosphate + H(+). In terms of biological role, GTP hydrolase that promotes the GTP-dependent binding of aminoacyl-tRNA to the A-site of ribosomes during protein biosynthesis. The polypeptide is Elongation factor Tu 2 (Orientia tsutsugamushi (strain Boryong) (Rickettsia tsutsugamushi)).